We begin with the raw amino-acid sequence, 349 residues long: Sesquiterpene synthase MAC_05714 (349 aa).

Residues D91 and D96 each contribute to the Mg(2+) site. The DDXXXD motif motif lies at 91–96 (DDLFVD). R184 serves as a coordination point for substrate. The Mg(2+) site is built by N230, S234, and E238.

It belongs to the terpene synthase family. It depends on Mg(2+) as a cofactor.

It catalyses the reaction (2E,6E)-farnesyl diphosphate + H2O = (+)-corvol ether B + diphosphate. It carries out the reaction (2E,6E)-farnesyl diphosphate + H2O = (+)-corvol ether A + diphosphate. Its function is as follows. Terpene synthase that catalyzes the conversion of (2E,6E)-farnesyl diphosphate (FPP) into sesquiterpenes which are important for fungi-environment interactions. Produces a mixture consisting of 8 sesquiterpenes including corvol ethers A and B, as well as traces of epizonarene, gamma-cadinene, delta-cadinene, alpha-cadinene, alpha-cadinol, and an unidentified sesquiterpene. Produces both corvol ether A and corvol ether B in similar concentrations. The sequence is that of Sesquiterpene synthase MAC_05714 from Metarhizium acridum (strain CQMa 102).